The following is a 119-amino-acid chain: Large ribosomal subunit protein uL18 (119 aa).

It belongs to the universal ribosomal protein uL18 family. In terms of assembly, part of the 50S ribosomal subunit; part of the 5S rRNA/L5/L18/L25 subcomplex. Contacts the 5S and 23S rRNAs.

Functionally, this is one of the proteins that bind and probably mediate the attachment of the 5S RNA into the large ribosomal subunit, where it forms part of the central protuberance. In Nitratidesulfovibrio vulgaris (strain DSM 19637 / Miyazaki F) (Desulfovibrio vulgaris), this protein is Large ribosomal subunit protein uL18.